We begin with the raw amino-acid sequence, 150 residues long: Protein Turandot X1/X2 (150 aa).

The first 22 residues, 1–22 (MRLYIGSLLICVLLGIVPFATA), serve as a signal peptide directing secretion. The interval 127–150 (REEGQSNHANSPTTSPSRIQKMTK) is disordered. The span at 132-150 (SNHANSPTTSPSRIQKMTK) shows a compositional bias: polar residues.

It belongs to the Turandot family.

It localises to the secreted. In terms of biological role, a humoral factor that may play a role in stress tolerance. This is Protein Turandot X1/X2 from Drosophila sechellia (Fruit fly).